We begin with the raw amino-acid sequence, 329 residues long: MQGSVTEFLKPRLVDIEQVSSTHAKVTLEPLERGFGHTLGNALRRILLSSMPGCAVTEVEIDGVLHEYSTKEGVQEDILEILLNLKGLAVRVQGKDEVVLTLNKSGIGPVTAADITHDGDVEIVKPQHVICHLTDENASISMRIKVQRGRGYVPASARIHSEEDERPIGRLLVDACYSPVERIAYNVEAARVEQRTDLDKLVIEMETNGTIDPEEAIRRAATILAEQLEAFVDLRDVRQPEVKEEKPEFDPILLRPVDDLELTVRSANCLKAEAIHYIGDLVQRTEVELLKTPNLGKKSLTEIKDVLASRGLSLGMRLENWPPASIADE.

Residues 1–235 (MQGSVTEFLK…EQLEAFVDLR (235 aa)) are alpha N-terminal domain (alpha-NTD). An alpha C-terminal domain (alpha-CTD) region spans residues 249–329 (FDPILLRPVD…NWPPASIADE (81 aa)).

The protein belongs to the RNA polymerase alpha chain family. In terms of assembly, homodimer. The RNAP catalytic core consists of 2 alpha, 1 beta, 1 beta' and 1 omega subunit. When a sigma factor is associated with the core the holoenzyme is formed, which can initiate transcription.

The catalysed reaction is RNA(n) + a ribonucleoside 5'-triphosphate = RNA(n+1) + diphosphate. Its function is as follows. DNA-dependent RNA polymerase catalyzes the transcription of DNA into RNA using the four ribonucleoside triphosphates as substrates. The protein is DNA-directed RNA polymerase subunit alpha of Cronobacter sakazakii (strain ATCC BAA-894) (Enterobacter sakazakii).